A 355-amino-acid polypeptide reads, in one-letter code: MSDALRLDTCLDQIASQLPALTASCRVVEALAGAARQIAHLLARGPLSGDLGAVIGESLDGDGQKALDAITHALVREAVIASGAAAFASEEAAAPEWLDPVGEVAVAVDPLDGSSNIDTLAPVGTIFSILPARHASGADPASPFLQTGRRQLAAGFFIYGPRTALAVTFGNGTRIFTLDPVSGAFLAPAPPATVPAATREYAINGSNLRHWEEPIRDYIVELKQGRNGPRGIDFNTRWLASMVGDAFRILGRGGIYLYPADERQGYEAGRLRLVYEANPIAFLMEQAGASATDGRIPILDLQPAHIHQRCPLVFGSADEVRRVAQAYERAGQPSSPLFRRRSLFRSTSNVAELFA.

Mg(2+)-binding residues include Glu-90, Asp-109, Leu-111, and Asp-112. Residues Asp-112–Ser-115, Asn-204, and Tyr-256–Tyr-258 contribute to the substrate site. Glu-276 contributes to the Mg(2+) binding site.

It belongs to the FBPase class 1 family. As to quaternary structure, homotetramer. Mg(2+) serves as cofactor.

The protein resides in the cytoplasm. It carries out the reaction beta-D-fructose 1,6-bisphosphate + H2O = beta-D-fructose 6-phosphate + phosphate. It functions in the pathway carbohydrate biosynthesis; gluconeogenesis. The protein is Fructose-1,6-bisphosphatase class 1 of Acidiphilium cryptum (strain JF-5).